We begin with the raw amino-acid sequence, 231 residues long: uncharacterized protein (231 aa).

The first 25 residues, 1-25 (MAKWVPALLLRRVPLFSLRFRPASS), serve as a signal peptide directing secretion. Over 26–200 (TFLPVLAATE…SRPSPSATLT (175 aa)) the chain is Extracellular. Residues 39 to 64 (SVPSGDLSMPVKTRAEGEDDGFGEAG) are disordered. A helical membrane pass occupies residues 201–225 (LLLASSCLLAPAPPSFILLLFTLIA). Topologically, residues 226–231 (PDLPHS) are cytoplasmic.

Its subcellular location is the membrane. This is an uncharacterized protein from Homo sapiens (Human).